Consider the following 214-residue polypeptide: Large ribosomal subunit protein eL14 (214 aa).

Residue Lys79 is modified to N6-acetyllysine. An N6-acetyllysine; alternate modification is found at Lys85. Lys85 is modified (N6-succinyllysine; alternate). Residue Lys124 forms a Glycyl lysine isopeptide (Lys-Gly) (interchain with G-Cter in SUMO2) linkage. Ser139 carries the post-translational modification Phosphoserine. The segment at 161–214 (PAKKITTEGKKAPAQKAPAQKAAGQKAAPPPKTQKGQKAPSQKAPAPKASGKKA) is disordered. Residues 170–174 (KKAPA) form a 1-1; approximate repeat. The interval 170-189 (KKAPAQKAPAQKAAGQKAAP) is 4 X 5 AA tandem repeats of Q-K-A-[APS]-X. The segment covering 172 to 214 (APAQKAPAQKAAGQKAAPPPKTQKGQKAPSQKAPAPKASGKKA) has biased composition (low complexity). 5 consecutive repeat copies span residues 175-179 (QKAPA), 180-184 (QKAAG), 185-189 (QKAAP), 192-194 (KTQ), and 195-197 (KGQ). The segment at 192–197 (KTQKGQ) is 2 X 3 AA tandem repeats of K-G-Q. Lys203 carries the post-translational modification N6-succinyllysine.

This sequence belongs to the eukaryotic ribosomal protein eL14 family. Component of the large ribosomal subunit.

The protein localises to the cytoplasm. Its function is as follows. Component of the large ribosomal subunit. The ribosome is a large ribonucleoprotein complex responsible for the synthesis of proteins in the cell. This Bos taurus (Bovine) protein is Large ribosomal subunit protein eL14 (RPL14).